A 1192-amino-acid chain; its full sequence is DNA ligase 1 (1192 aa).

Disordered regions lie at residues 29–257 (ELNK…KEKE) and 280–517 (EKEL…KSTQ). Basic and acidic residues predominate over residues 42–56 (EAVVKEKVEKKEKKE). Acidic residues predominate over residues 70 to 113 (EEEEEEQEEQDGEEEQEEEEEYQQQDEEIEEDINGEEEMELDEN). Over residues 141 to 155 (KTIENKETKKPEKQS) the composition is skewed to basic and acidic residues. Positions 172–198 (DDEEDEEDENKTDDNDLDDMLDDDSDN) are enriched in acidic residues. Composition is skewed to basic and acidic residues over residues 199-257 (EKDS…KEKE) and 280-368 (EKEL…RANA). Low complexity-rich tracts occupy residues 371–382 (KSSVPTSTSKNS) and 410–434 (STTT…ISSP). Over residues 435 to 467 (SKKEEKEVITSKKQVEATKVEVKKEKEKEKEKE) the composition is skewed to basic and acidic residues. A compositionally biased stretch (acidic residues) spans 468 to 511 (KEDDEEEEEEEEDDDEKLEDIDEEEYEEEEEEDEEGISENEEEE). The interaction with target DNA stretch occupies residues 724–733 (KLRIGLAERS). Position 842 (glutamate 842) interacts with ATP. The active-site N6-AMP-lysine intermediate is lysine 844. 2 residues coordinate ATP: arginine 849 and arginine 865. Glutamate 897 provides a ligand contact to Mg(2+). The interval 918 to 920 (ARK) is interaction with target DNA. Glutamate 996 contributes to the Mg(2+) binding site. Residues lysine 1001, arginine 1014, and lysine 1020 each contribute to the ATP site. The interval 1157–1192 (DKSPEDATSSDQVVDMYQNQKINSQSSKINEKDEDY) is disordered. The segment covering 1162-1184 (DATSSDQVVDMYQNQKINSQSSK) has biased composition (polar residues).

The protein belongs to the ATP-dependent DNA ligase family. Mg(2+) serves as cofactor.

The protein localises to the nucleus. The catalysed reaction is ATP + (deoxyribonucleotide)n-3'-hydroxyl + 5'-phospho-(deoxyribonucleotide)m = (deoxyribonucleotide)n+m + AMP + diphosphate.. DNA ligase that seals nicks in double-stranded DNA during DNA replication, DNA recombination and DNA repair. This chain is DNA ligase 1 (lig1), found in Dictyostelium discoideum (Social amoeba).